We begin with the raw amino-acid sequence, 280 residues long: 3-phenylpropionate-dihydrodiol/cinnamic acid-dihydrodiol dehydrogenase (280 aa).

S143 contributes to the substrate binding site. The active-site Proton acceptor is Y156.

This sequence belongs to the short-chain dehydrogenases/reductases (SDR) family.

The enzyme catalyses 3-(cis-5,6-dihydroxycyclohexa-1,3-dien-1-yl)propanoate + NAD(+) = 3-(2,3-dihydroxyphenyl)propanoate + NADH + H(+). It carries out the reaction (2E)-3-(cis-5,6-dihydroxycyclohexa-1,3-dien-1-yl)prop-2-enoate + NAD(+) = (2E)-3-(2,3-dihydroxyphenyl)prop-2-enoate + NADH + H(+). It participates in aromatic compound metabolism; 3-phenylpropanoate degradation. Functionally, converts 3-phenylpropionate-dihydrodiol (PP-dihydrodiol) and cinnamic acid-dihydrodiol (CI-dihydrodiol) into 3-(2,3-dihydroxylphenyl)propanoic acid (DHPP) and 2,3-dihydroxicinnamic acid (DHCI), respectively. The polypeptide is 3-phenylpropionate-dihydrodiol/cinnamic acid-dihydrodiol dehydrogenase (Photorhabdus laumondii subsp. laumondii (strain DSM 15139 / CIP 105565 / TT01) (Photorhabdus luminescens subsp. laumondii)).